The following is a 304-amino-acid chain: Transcription factor BEE 2 (304 aa).

Residues 74–132 (FHMEPVKNNGHSRAITLQNKRKPEGKTEKREKKKIKAEDETEPSMKGKSNMSNTETSSE) form a disordered region. Polar residues predominate over residues 82–91 (NGHSRAITLQ). Positions 94-103 (RKPEGKTEKR) are enriched in basic and acidic residues. Positions 120–132 (GKSNMSNTETSSE) are enriched in polar residues. Positions 147-197 (EATDRHSLAERARREKISKKMKCLQDIVPGCNKVTGKAGMLDEIINYVQSL) constitute a bHLH domain.

Homodimer. Expressed in stems and flowers.

The protein localises to the nucleus. Its function is as follows. Positive regulator of brassinosteroid signaling. This chain is Transcription factor BEE 2 (BEE2), found in Arabidopsis thaliana (Mouse-ear cress).